Consider the following 491-residue polypeptide: Cell division control protein 1 (491 aa).

Residues 1 to 33 are disordered; sequence MVYRNRSKSVLSTHSKKSDDKAHYKSRSKKKSK. The Cytoplasmic segment spans residues 1–39; it reads MVYRNRSKSVLSTHSKKSDDKAHYKSRSKKKSKSRSKKR. Residues 24–33 are compositionally biased toward basic residues; the sequence is YKSRSKKKSK. The chain crosses the membrane as a helical span at residues 40–60; sequence LRIYWRYISIVWILWLGLISY. At 61-391 the chain is on the extracellular side; that stretch reads YESVVVKRAM…LCYMPDPYKA (331 aa). Residues Asp95, Asp144, Asn183, and His323 each coordinate a divalent metal cation. The helical transmembrane segment at 392-412 threads the bilayer; that stretch reads IRMYLWGLLFSAAFIAYMHFF. At 413–465 the chain is on the cytoplasmic side; that stretch reads PKSFNNRVATIMNRVFTRPDGNTSDLPLPTSISKSKSKKSLTHSKYAVNDTRS. A helical transmembrane segment spans residues 466-486; sequence IKQFLVNAIVLFVSVMPIFIY. At 487 to 491 the chain is on the extracellular side; that stretch reads FYTVV.

The protein belongs to the metallophosphoesterase superfamily. MPPE1 family. It depends on a divalent metal cation as a cofactor.

It is found in the membrane. In terms of biological role, probable metallophosphoesterase which may participate in recombinational repair of double -strand breaks. This chain is Cell division control protein 1 (CDC1), found in Saccharomyces cerevisiae (strain ATCC 204508 / S288c) (Baker's yeast).